Here is an 892-residue protein sequence, read N- to C-terminus: Alanine--tRNA ligase (892 aa).

Zn(2+)-binding residues include H596, H600, C700, and H704.

The protein belongs to the class-II aminoacyl-tRNA synthetase family. The cofactor is Zn(2+).

Its subcellular location is the cytoplasm. The catalysed reaction is tRNA(Ala) + L-alanine + ATP = L-alanyl-tRNA(Ala) + AMP + diphosphate. Catalyzes the attachment of alanine to tRNA(Ala) in a two-step reaction: alanine is first activated by ATP to form Ala-AMP and then transferred to the acceptor end of tRNA(Ala). Also edits incorrectly charged Ser-tRNA(Ala) and Gly-tRNA(Ala) via its editing domain. The chain is Alanine--tRNA ligase from Methanococcus maripaludis (strain DSM 14266 / JCM 13030 / NBRC 101832 / S2 / LL).